The chain runs to 109 residues: Putative antitoxin HigA3 (109 aa).

An HTH cro/C1-type domain is found at 41-97 (LAEIRKALGHARQADVAALMGVSQARVSKLESGDLSHTELGTLQAYVAALGGHLRIV). Positions 53–72 (QADVAALMGVSQARVSKLES) form a DNA-binding region, H-T-H motif.

Its function is as follows. Putative antitoxin component of a type II toxin-antitoxin (TA) system. Its cognate toxin would be HigB3. The protein is Putative antitoxin HigA3 of Mycobacterium tuberculosis (strain ATCC 25618 / H37Rv).